The chain runs to 402 residues: NADH-quinone oxidoreductase subunit D (402 aa).

It belongs to the complex I 49 kDa subunit family. NDH-1 is composed of 14 different subunits. Subunits NuoB, C, D, E, F, and G constitute the peripheral sector of the complex.

The protein resides in the cell inner membrane. It catalyses the reaction a quinone + NADH + 5 H(+)(in) = a quinol + NAD(+) + 4 H(+)(out). In terms of biological role, NDH-1 shuttles electrons from NADH, via FMN and iron-sulfur (Fe-S) centers, to quinones in the respiratory chain. The immediate electron acceptor for the enzyme in this species is believed to be ubiquinone. Couples the redox reaction to proton translocation (for every two electrons transferred, four hydrogen ions are translocated across the cytoplasmic membrane), and thus conserves the redox energy in a proton gradient. The sequence is that of NADH-quinone oxidoreductase subunit D from Nitrobacter winogradskyi (strain ATCC 25391 / DSM 10237 / CIP 104748 / NCIMB 11846 / Nb-255).